The primary structure comprises 434 residues: D-amino acid dehydrogenase (434 aa).

3–17 (VLVLGSGVIGTASAY) contacts FAD.

Belongs to the DadA oxidoreductase family. The cofactor is FAD.

The enzyme catalyses a D-alpha-amino acid + A + H2O = a 2-oxocarboxylate + AH2 + NH4(+). It functions in the pathway amino-acid degradation; D-alanine degradation; NH(3) and pyruvate from D-alanine: step 1/1. Its function is as follows. Oxidative deamination of D-amino acids. This Pseudomonas entomophila (strain L48) protein is D-amino acid dehydrogenase.